Reading from the N-terminus, the 913-residue chain is Rab GTPase-activating protein tbc-8 (913 aa).

Residues 1–24 form a disordered region; the sequence is MQMFRHSSADMWRAKKPTLERRST. One can recognise an RUN domain in the interval 106-240; it reads NLNSPYVTSL…TYRRMSNRIE (135 aa). Residues 597 to 844 form the Rab-GAP TBC domain; it reads INTKEVRRMA…KVWEVIWAAQ (248 aa).

This sequence belongs to the RUTBC family. As to quaternary structure, interacts with rab-19. Interacts with ric-19; the interaction is direct and may be required for the activation of rab-2 and dense vesicle maturation in cholinergic motoneurons. Interacts (via RUN domain) with rund-1. Does not interact with unc-108 (GTP-bound form). Expressed in neurons in the head, tail and ventral nerve cord (at protein level).

It is found in the golgi apparatus. Its subcellular location is the trans-Golgi network. The protein localises to the early endosome. The protein resides in the cytoplasmic vesicle membrane. Its function is as follows. Interacts with numerous Rab family members, functioning as Rab effector for some, and as GTPase activator for others. GTPase activator for rab-2. In association with ric-19 activates rab-2 during dense core vesicle maturation in cholinergic motoneurons. This Caenorhabditis elegans protein is Rab GTPase-activating protein tbc-8.